Here is a 697-residue protein sequence, read N- to C-terminus: Potassium-transporting ATPase ATP-binding subunit (697 aa).

The next 4 membrane-spanning stretches (helical) occupy residues 55–75 (PIMFVVEIGFVITFILSFFPS), 79–99 (SIPGWFNITVSLILLFTVLFA), 245–265 (LTLIFLIVVVTLPIFTNYLGF), and 271–291 (VLVALLVCLIPTTIGGLLSAI). Asp-324 (4-aspartylphosphate intermediate) is an active-site residue. ATP is bound by residues Asp-361, Glu-365, 393–400 (FKAETRMS), and Lys-412. Mg(2+)-binding residues include Asp-535 and Asp-539. 3 consecutive transmembrane segments (helical) span residues 605-625 (FAIIPAMFTLAIPQMEALNIM), 633-653 (AILSALLFNAVIIPLLIPLAM), and 677-697 (GGVIVPFIGIKVIDIIVGLFI).

This sequence belongs to the cation transport ATPase (P-type) (TC 3.A.3) family. Type IA subfamily. In terms of assembly, the system is composed of three essential subunits: KdpA, KdpB and KdpC.

It localises to the cell membrane. The enzyme catalyses K(+)(out) + ATP + H2O = K(+)(in) + ADP + phosphate + H(+). In terms of biological role, part of the high-affinity ATP-driven potassium transport (or Kdp) system, which catalyzes the hydrolysis of ATP coupled with the electrogenic transport of potassium into the cytoplasm. This subunit is responsible for energy coupling to the transport system and for the release of the potassium ions to the cytoplasm. The polypeptide is Potassium-transporting ATPase ATP-binding subunit (Bacillus cereus (strain AH820)).